The following is a 337-amino-acid chain: Ferredoxin--NADP reductase (337 aa).

Residues D35, Q43, Y48, A88, F122, D289, and T330 each coordinate FAD.

This sequence belongs to the ferredoxin--NADP reductase type 2 family. Homodimer. FAD is required as a cofactor.

The enzyme catalyses 2 reduced [2Fe-2S]-[ferredoxin] + NADP(+) + H(+) = 2 oxidized [2Fe-2S]-[ferredoxin] + NADPH. The protein is Ferredoxin--NADP reductase of Ehrlichia ruminantium (strain Welgevonden).